We begin with the raw amino-acid sequence, 275 residues long: Phosphonoacetaldehyde hydrolase (275 aa).

D15 serves as the catalytic Nucleophile. Mg(2+) is bound by residues D15 and A17. The Schiff-base intermediate with substrate role is filled by K56. A Mg(2+)-binding site is contributed by D189.

It belongs to the HAD-like hydrolase superfamily. PhnX family. As to quaternary structure, homodimer. Requires Mg(2+) as cofactor.

It carries out the reaction phosphonoacetaldehyde + H2O = acetaldehyde + phosphate + H(+). Its function is as follows. Involved in phosphonate degradation. The polypeptide is Phosphonoacetaldehyde hydrolase (Pseudomonas paraeruginosa (strain DSM 24068 / PA7) (Pseudomonas aeruginosa (strain PA7))).